A 403-amino-acid chain; its full sequence is 5,7-dihydroxy-2-methylchromone synthase (403 aa).

Histidine 68 is a CoA binding site. Residue cysteine 174 is part of the active site. The residue at position 174 (cysteine 174) is a Cysteine sulfinic acid (-SO2H). CoA contacts are provided by residues leucine 277, serine 281, and 318–321; that span reads GGRA.

This sequence belongs to the thiolase-like superfamily. Chalcone/stilbene synthases family. Homodimer.

The enzyme catalyses 5 malonyl-CoA + 4 H(+) = 5,7-dihydroxy-2-methyl-4H-chromen-4-one + 5 CO2 + 5 CoA + H2O. The protein operates within secondary metabolite biosynthesis; flavonoid biosynthesis. Functionally, catalyzes the iterative condensations of 5 molecules of malonyl-CoA to produce a pentaketide 5,7-dihydroxy-2-methylchromone. The protein is 5,7-dihydroxy-2-methylchromone synthase of Aloe arborescens (Kidachi aloe).